The following is a 189-amino-acid chain: Probable transcriptional regulator Rv1176c (189 aa).

The protein belongs to the PadR family. In terms of assembly, homodimer.

It is found in the cytoplasm. Probable transcriptional regulator that may help mitigate the effect of oxidative stress and help mycobacteria survive inside macrophages. Binds to its own promoter region. The chain is Probable transcriptional regulator Rv1176c from Mycobacterium tuberculosis (strain ATCC 25618 / H37Rv).